Reading from the N-terminus, the 106-residue chain is Thioredoxin (106 aa).

One can recognise a Thioredoxin domain in the interval 2 to 106 (VQVISNLDEF…LESLVQKSLA (105 aa)). Active-site nucleophile residues include Cys-30 and Cys-33. Cys-30 and Cys-33 are disulfide-bonded.

It belongs to the thioredoxin family.

Functionally, participates in various redox reactions through the reversible oxidation of its active center dithiol to a disulfide and catalyzes dithiol-disulfide exchange reactions. The sequence is that of Thioredoxin from Coprinus comatus (Shaggy mane).